Reading from the N-terminus, the 212-residue chain is Peroxiredoxin 2 (212 aa).

The Thioredoxin domain maps to 7–162 (PLIGEKFPEM…ILRSIRALQL (156 aa)). Cys-49 functions as the Cysteine sulfenic acid (-SOH) intermediate in the catalytic mechanism. Arg-125 contributes to the substrate binding site.

It belongs to the peroxiredoxin family. Prx6 subfamily. In terms of assembly, homodecamer. Pentamer of dimers that assemble into a ring structure.

The protein localises to the cytoplasm. The enzyme catalyses a hydroperoxide + [thioredoxin]-dithiol = an alcohol + [thioredoxin]-disulfide + H2O. Thiol-specific peroxidase that catalyzes the reduction of hydrogen peroxide and organic hydroperoxides to water and alcohols, respectively. Plays a role in cell protection against oxidative stress by detoxifying peroxides. The protein is Peroxiredoxin 2 of Sulfurisphaera tokodaii (strain DSM 16993 / JCM 10545 / NBRC 100140 / 7) (Sulfolobus tokodaii).